Reading from the N-terminus, the 237-residue chain is Ribonuclease 3 (237 aa).

Residues 4–130 (IQILFQTLNI…LFGAIYLDLG (127 aa)) enclose the RNase III domain. Residue E45 participates in Mg(2+) binding. D49 is a catalytic residue. 2 residues coordinate Mg(2+): D116 and E119. Residue E119 is part of the active site. Residues 154–222 (DFKTQLQEIV…AQQALSKVAK (69 aa)) enclose the DRBM domain.

Belongs to the ribonuclease III family. In terms of assembly, homodimer. The cofactor is Mg(2+).

The protein resides in the cytoplasm. It carries out the reaction Endonucleolytic cleavage to 5'-phosphomonoester.. Its function is as follows. Digests double-stranded RNA. Involved in the processing of primary rRNA transcript to yield the immediate precursors to the large and small rRNAs (23S and 16S). Processes some mRNAs, and tRNAs when they are encoded in the rRNA operon. Processes pre-crRNA and tracrRNA of type II CRISPR loci if present in the organism. This Aster yellows witches'-broom phytoplasma (strain AYWB) protein is Ribonuclease 3.